We begin with the raw amino-acid sequence, 376 residues long: Carboxylic ester hydrolase LipN (376 aa).

Residues S216, D316, and H346 contribute to the active site.

Belongs to the 'GDXG' lipolytic enzyme family.

It localises to the cytoplasm. It carries out the reaction a carboxylic ester + H2O = an alcohol + a carboxylate + H(+). It catalyses the reaction an acetyl ester + H2O = an aliphatic alcohol + acetate + H(+). The enzyme catalyses a butanoate ester + H2O = an aliphatic alcohol + butanoate + H(+). The catalysed reaction is an octanoate ester + H2O = an aliphatic alcohol + octanoate + H(+). It carries out the reaction decanoate ester + H2O = decanoate + an aliphatic alcohol + H(+). It catalyses the reaction a dodecanoate ester + H2O = an aliphatic alcohol + dodecanoate + H(+). The enzyme catalyses 1,2,3-tributanoylglycerol + H2O = dibutanoylglycerol + butanoate + H(+). The catalysed reaction is 4-acetoxyphenol + H2O = hydroquinone + acetate + H(+). Its activity is regulated as follows. Completely inhibited by tetrahydrolipstatin (THL), RHC-80267 and N-bromosuccinimide. In terms of biological role, non specific carboxylic ester hydrolase. Hydrolyzes various pNP-esters, with a preference for short carbon chain substrates. Can also hydrolyze tributyrin to di- and monobutyrin and 4-hydroxyphenylacetate to hydroquinone. The chain is Carboxylic ester hydrolase LipN from Mycobacterium tuberculosis (strain ATCC 25618 / H37Rv).